We begin with the raw amino-acid sequence, 356 residues long: tRNA N6-adenosine threonylcarbamoyltransferase (356 aa).

Fe cation-binding residues include His115 and His119. Substrate-binding positions include 138–142 (LVSGG), Asp171, Gly184, and Asn283. Asp311 contacts Fe cation.

It belongs to the KAE1 / TsaD family. Fe(2+) serves as cofactor.

Its subcellular location is the cytoplasm. It catalyses the reaction L-threonylcarbamoyladenylate + adenosine(37) in tRNA = N(6)-L-threonylcarbamoyladenosine(37) in tRNA + AMP + H(+). In terms of biological role, required for the formation of a threonylcarbamoyl group on adenosine at position 37 (t(6)A37) in tRNAs that read codons beginning with adenine. Is involved in the transfer of the threonylcarbamoyl moiety of threonylcarbamoyl-AMP (TC-AMP) to the N6 group of A37, together with TsaE and TsaB. TsaD likely plays a direct catalytic role in this reaction. In Prochlorococcus marinus (strain MIT 9215), this protein is tRNA N6-adenosine threonylcarbamoyltransferase.